The following is a 301-amino-acid chain: Inosose dehydratase (301 aa).

Belongs to the IolE/MocC family. Requires glutathione as cofactor. The cofactor is Co(2+). Mn(2+) serves as cofactor.

The catalysed reaction is scyllo-inosose = 3D-3,5/4-trihydroxycyclohexane-1,2-dione + H2O. In terms of biological role, catalyzes the dehydration of inosose (2-keto-myo-inositol, 2KMI or 2,4,6/3,5-pentahydroxycyclohexanone) to 3D-(3,5/4)-trihydroxycyclohexane-1,2-dione (D-2,3-diketo-4-deoxy-epi-inositol). In Salmonella typhimurium (strain LT2 / SGSC1412 / ATCC 700720), this protein is Inosose dehydratase.